Here is a 270-residue protein sequence, read N- to C-terminus: Monofunctional glycosyltransferase (270 aa).

Over residues 1–10 the composition is skewed to polar residues; the sequence is MKRSQRMNNS. The segment at 1 to 36 is disordered; it reads MKRSQRMNNSPERHSQYRNEPHYNTYYQPVGKPPKK. Over residues 11–21 the composition is skewed to basic and acidic residues; it reads PERHSQYRNEP. The helical transmembrane segment at 42 to 62 threads the bilayer; that stretch reads IFLRLFIIFVFIYALFIGLMY.

Belongs to the glycosyltransferase 51 family.

It localises to the cell membrane. The catalysed reaction is [GlcNAc-(1-&gt;4)-Mur2Ac(oyl-L-Ala-gamma-D-Glu-L-Lys-D-Ala-D-Ala)](n)-di-trans,octa-cis-undecaprenyl diphosphate + beta-D-GlcNAc-(1-&gt;4)-Mur2Ac(oyl-L-Ala-gamma-D-Glu-L-Lys-D-Ala-D-Ala)-di-trans,octa-cis-undecaprenyl diphosphate = [GlcNAc-(1-&gt;4)-Mur2Ac(oyl-L-Ala-gamma-D-Glu-L-Lys-D-Ala-D-Ala)](n+1)-di-trans,octa-cis-undecaprenyl diphosphate + di-trans,octa-cis-undecaprenyl diphosphate + H(+). It participates in cell wall biogenesis; peptidoglycan biosynthesis. Its function is as follows. Peptidoglycan polymerase that catalyzes glycan chain elongation using lipid-linked disaccharide-pentapeptide as the substrate. The sequence is that of Monofunctional glycosyltransferase from Staphylococcus haemolyticus (strain JCSC1435).